Consider the following 431-residue polypeptide: Dual-specificity RNA methyltransferase RlmN (431 aa).

Residues 1–26 (MATASLDTARPERRAGSDPFIEKTPE) form a disordered region. The segment covering 9 to 26 (ARPERRAGSDPFIEKTPE) has biased composition (basic and acidic residues). The active-site Proton acceptor is E138. The Radical SAM core domain maps to 144–394 (ANDRGTLCVS…VRTPRGRDIL (251 aa)). An intrachain disulfide couples C151 to C397. Residues C158, C162, and C165 each coordinate [4Fe-4S] cluster. S-adenosyl-L-methionine is bound by residues 223–224 (GE), S255, 277–279 (SLH), and N354. C397 serves as the catalytic S-methylcysteine intermediate.

It belongs to the radical SAM superfamily. RlmN family. [4Fe-4S] cluster serves as cofactor.

The protein resides in the cytoplasm. The catalysed reaction is adenosine(2503) in 23S rRNA + 2 reduced [2Fe-2S]-[ferredoxin] + 2 S-adenosyl-L-methionine = 2-methyladenosine(2503) in 23S rRNA + 5'-deoxyadenosine + L-methionine + 2 oxidized [2Fe-2S]-[ferredoxin] + S-adenosyl-L-homocysteine. It carries out the reaction adenosine(37) in tRNA + 2 reduced [2Fe-2S]-[ferredoxin] + 2 S-adenosyl-L-methionine = 2-methyladenosine(37) in tRNA + 5'-deoxyadenosine + L-methionine + 2 oxidized [2Fe-2S]-[ferredoxin] + S-adenosyl-L-homocysteine. Its function is as follows. Specifically methylates position 2 of adenine 2503 in 23S rRNA and position 2 of adenine 37 in tRNAs. m2A2503 modification seems to play a crucial role in the proofreading step occurring at the peptidyl transferase center and thus would serve to optimize ribosomal fidelity. The protein is Dual-specificity RNA methyltransferase RlmN of Methylobacterium sp. (strain 4-46).